The primary structure comprises 433 residues: Alpha-(1-&gt;3)-arabinofuranosyltransferase (433 aa).

A run of 10 helical transmembrane segments spans residues 118 to 138 (LFISINTAAILVAAYLLLRMF), 140 to 160 (FTLTSVAAPALILAMFATETV), 164 to 184 (LVFTNINGCILLLEVLFLRWL), 197 to 217 (LAIGLTLVLKPLLGPLLLLPL), 224 to 244 (ALVAAVVVPVVVNVAALPLVS), 280 to 300 (WLILFLRILFTAITFGALWLL), 310 to 330 (LFWFTTSSGVLLLWSWLVMSL), 333 to 353 (GYYSMMLFPFLMTVVLPNSVI), 356 to 376 (WPAWLGVYGFMTLDRWLLFNW), and 385 to 405 (YLKITYGWSLLLIVTFTVLYF).

The protein belongs to the glycosyltransferase 87 family.

The protein localises to the cell membrane. The enzyme catalyses Adds an alpha-D-arabinofuranosyl group from trans,octacis-decaprenylphospho-beta-D-arabinofuranose at the 3-O-position of an alpha-(1-&gt;5)-arabinofuranan chain attached to a beta-(1-&gt;5)-galactofuranan chain.. It functions in the pathway cell wall biogenesis; cell wall polysaccharide biosynthesis. Involved in the biosynthesis of the arabinogalactan (AG) region of the mycolylarabinogalactan-peptidoglycan (mAGP) complex, an essential component of the mycobacterial cell wall. Catalyzes the addition of an arabinofuranosyl (Araf) residue from the sugar donor beta-D-arabinofuranosyl-1-monophosphoryldecaprenol (DPA) on the C-3 of an alpha-(1-&gt;5)-linked Araf from the arabinan backbone of AG. This chain is Alpha-(1-&gt;3)-arabinofuranosyltransferase (aftC), found in Mycobacterium tuberculosis (strain CDC 1551 / Oshkosh).